Reading from the N-terminus, the 364-residue chain is Aminomethyltransferase (364 aa).

Belongs to the GcvT family. As to quaternary structure, the glycine cleavage system is composed of four proteins: P, T, L and H.

The enzyme catalyses N(6)-[(R)-S(8)-aminomethyldihydrolipoyl]-L-lysyl-[protein] + (6S)-5,6,7,8-tetrahydrofolate = N(6)-[(R)-dihydrolipoyl]-L-lysyl-[protein] + (6R)-5,10-methylene-5,6,7,8-tetrahydrofolate + NH4(+). The glycine cleavage system catalyzes the degradation of glycine. This chain is Aminomethyltransferase, found in Desulforamulus reducens (strain ATCC BAA-1160 / DSM 100696 / MI-1) (Desulfotomaculum reducens).